The sequence spans 519 residues: Signal transduction histidine-protein kinase/phosphatase MprB (519 aa).

At 1–26 (MVRFAWRRRASLRATSSLSLRWRVML) the chain is on the cytoplasmic side. The helical transmembrane segment at 27–47 (LAMSMVAMVVVLMAFAVYVVI) threads the bilayer. Residues 48-163 (SAALYSDIDN…PTEAVMTKLR (116 aa)) are Extracellular-facing. A helical membrane pass occupies residues 164-184 (WVLLIVGSLGVAVAAVAGGMV). Residues 185 to 519 (TRAGLRPVGR…SVDYQSARAR (335 aa)) are Cytoplasmic-facing. Positions 186 to 238 (RAGLRPVGRLTEAAERVARTDDLRPIPVFGSDELARLTEAFNLMLRALAESRE) constitute an HAMP domain. Residues 246 to 466 (DAGHELRTPL…SIYVLLPGRP (221 aa)) enclose the Histidine kinase domain. At His249 the chain carries Phosphohistidine; by autocatalysis.

Mg(2+) is required as a cofactor. Requires Mn(2+) as cofactor. Post-translationally, autophosphorylated.

The protein resides in the cell membrane. It carries out the reaction ATP + protein L-histidine = ADP + protein N-phospho-L-histidine.. Member of the two-component regulatory system MprB/MprA which contributes to maintaining a balance among several systems involved in stress resistance and is required for establishment and maintenance of persistent infection in the host. In response to environmental signals MprB acts both as a membrane-associated protein kinase that undergoes autophosphorylation and subsequently transfers the phosphate to MprA, and a protein phosphatase that dephosphorylates phospho-MprA. This is Signal transduction histidine-protein kinase/phosphatase MprB (mprB) from Mycobacterium leprae (strain TN).